A 329-amino-acid polypeptide reads, in one-letter code: MQFIDQARIMVYAGRGGDGIVAFRREKYVPAGGPSGGDGGRGGNVIFEADSNLQTLLDFKYKRIFYAEDGNRGGPNRCSGVSGSNLVIKVPCGTEVRHLGSGILLGDLTEPSQQLMIAFGGRGGLGNAHYLSNRNRVPEKFTLGREGEEWPLQLELKLLAEVGIIGLPNAGKSTLIGNLSAAKPKIADYPFTTLIPNLGAVYRPNGDSIIFADIPGLILGAANGAGLGYDFLRHIERTRLLVHLIDSSAKDLVHDLIVVEGELIAYGHGLADRPRIVVLSKIELLSGEELHQFSQALRMVSGCKILVISSAILSSIEFLKTQIWQQLGT.

One can recognise an Obg domain in the interval 1–159 (MQFIDQARIM…WPLQLELKLL (159 aa)). The 169-residue stretch at 160–328 (AEVGIIGLPN…LKTQIWQQLG (169 aa)) folds into the OBG-type G domain. Residues 166–173 (GLPNAGKS), 191–195 (FTTLI), 213–216 (DIPG), 280–283 (SKIE), and 309–311 (SSA) contribute to the GTP site. 2 residues coordinate Mg(2+): Ser-173 and Thr-193.

Belongs to the TRAFAC class OBG-HflX-like GTPase superfamily. OBG GTPase family. As to quaternary structure, monomer. The cofactor is Mg(2+).

It localises to the plastid. It is found in the organellar chromatophore. Functionally, an essential GTPase which binds GTP, GDP and possibly (p)ppGpp with moderate affinity, with high nucleotide exchange rates and a fairly low GTP hydrolysis rate. The sequence is that of Putative GTPase Obg from Paulinella chromatophora.